The following is a 199-amino-acid chain: Thymidylate kinase (199 aa).

Gly7–Thr14 is a binding site for ATP.

This sequence belongs to the thymidylate kinase family.

It carries out the reaction dTMP + ATP = dTDP + ADP. Phosphorylation of dTMP to form dTDP in both de novo and salvage pathways of dTTP synthesis. The protein is Thymidylate kinase of Acinetobacter baumannii (strain AB307-0294).